Reading from the N-terminus, the 428-residue chain is Glutamate-1-semialdehyde 2,1-aminomutase 1 (428 aa).

At Lys-267 the chain carries N6-(pyridoxal phosphate)lysine.

Belongs to the class-III pyridoxal-phosphate-dependent aminotransferase family. HemL subfamily. In terms of assembly, homodimer. The cofactor is pyridoxal 5'-phosphate.

It is found in the cytoplasm. The enzyme catalyses (S)-4-amino-5-oxopentanoate = 5-aminolevulinate. It functions in the pathway porphyrin-containing compound metabolism; protoporphyrin-IX biosynthesis; 5-aminolevulinate from L-glutamyl-tRNA(Glu): step 2/2. This Staphylococcus aureus (strain MW2) protein is Glutamate-1-semialdehyde 2,1-aminomutase 1.